The primary structure comprises 366 residues: Putative actin-9 (366 aa).

This sequence belongs to the actin family. Polymerization of globular actin (G-actin) leads to a structural filament (F-actin) in the form of a two-stranded helix. The binding of profilin to monomeric G-actin cause the sequestration of actin into profilactin complexes, and prevents the polymerization.

It is found in the cytoplasm. The protein localises to the cytoskeleton. Functionally, actins are highly conserved proteins that are involved in various types of cell motility and are ubiquitously expressed in all eukaryotic cells. Essential component of cell cytoskeleton; plays an important role in cytoplasmic streaming, cell shape determination, cell division, organelle movement and extension growth. The sequence is that of Putative actin-9 (ACT9) from Arabidopsis thaliana (Mouse-ear cress).